The sequence spans 106 residues: Iron-sulfur cluster assembly protein CyaY (106 aa).

Belongs to the frataxin family.

Functionally, involved in iron-sulfur (Fe-S) cluster assembly. May act as a regulator of Fe-S biogenesis. This Escherichia coli (strain SMS-3-5 / SECEC) protein is Iron-sulfur cluster assembly protein CyaY.